A 406-amino-acid polypeptide reads, in one-letter code: E3 ubiquitin-protein ligase RING1 (406 aa).

At Thr-24 the chain carries Phosphothreonine. The necessary for transcriptional repression stretch occupies residues 30–234 (MDGTEIAVSP…GGAGSEDSGD (205 aa)). Ser-38 is subject to Phosphoserine. Residues 48–88 (CPICLDMLKNTMTTKECLHRFCSDCIVTALRSGNKECPTCR) form an RING-type zinc finger. Phosphoserine occurs at positions 140, 187, and 190. 2 disordered regions span residues 151–263 (HRAQ…GEIE) and 309–354 (QQQE…PSLE). Acidic residues predominate over residues 175-187 (EPGEGEGDGEDVS). Positions 201–204 (KRPR) match the Nuclear localization signal motif. Residues 214–228 (GTGGGAAGGACGGAG) are compositionally biased toward gly residues. Thr-215 carries the phosphothreonine modification. Phosphoserine is present on residues Ser-229 and Ser-232. Residues 230–406 (EDSGDRGGTL…LCYAPTKDPK (177 aa)) are necessary for interaction with CBX2. Over residues 235 to 244 (RGGTLGGGTL) the composition is skewed to gly residues. A compositionally biased stretch (pro residues) spans 246-258 (PPSPPGAPSPPEP). Ser-248 and Ser-254 each carry phosphoserine. Gly residues predominate over residues 317-343 (GGPGGGASDTGGPDGGGGERGVAGGGE).

Component of chromatin-associated Polycomb (PcG) complexes. Part of the E2F6.com-1 complex in G0 phase composed of E2F6, MGA, MAX, TFDP1, CBX3, BAT8, EUHMTASE1, RING1, RNF2/RING2 MBLR, L3MBTL2 and YAF2. Interacts with CBX2 and PCGF6. Component of a PRC1-like complex. Component of repressive BCOR complex containing Polycomb group subcomplex at least composed of RYBP, PCGF1, BCOR and RNF2/RING2. Interacts with PHC2, PCGF2, RNF2; CBX6, CBX7 and CBX8. Interacts with BMI1. Interacts with MN1. Interacts with USP26.

It localises to the nucleus speckle. It carries out the reaction S-ubiquitinyl-[E2 ubiquitin-conjugating enzyme]-L-cysteine + [acceptor protein]-L-lysine = [E2 ubiquitin-conjugating enzyme]-L-cysteine + N(6)-ubiquitinyl-[acceptor protein]-L-lysine.. The protein operates within protein modification; protein ubiquitination. Functionally, constitutes one of the E3 ubiquitin-protein ligases that mediate monoubiquitination of 'Lys-119' of histone H2A, thereby playing a central role in histone code and gene regulation. H2A 'Lys-119' ubiquitination gives a specific tag for epigenetic transcriptional repression and participates in X chromosome inactivation of female mammals. Essential component of a Polycomb group (PcG) multiprotein PRC1-like complex, a complex class required to maintain the transcriptionally repressive state of many genes, including Hox genes, throughout development. PcG PRC1 complex acts via chromatin remodeling and modification of histones, rendering chromatin heritably changed in its expressibility. Compared to RNF2/RING2, it does not have the main E3 ubiquitin ligase activity on histone H2A, and it may rather act as a modulator of RNF2/RING2 activity. The chain is E3 ubiquitin-protein ligase RING1 from Mus musculus (Mouse).